Reading from the N-terminus, the 156-residue chain is Large ribosomal subunit protein uL15 (156 aa).

Residues 1–13 (MKLNEIKDNEGAT) are compositionally biased toward basic and acidic residues. Residues 1 to 39 (MKLNEIKDNEGATKNRKRLGRGIGSGSGKTAGRGVKGQK) form a disordered region. The segment covering 21 to 35 (RGIGSGSGKTAGRGV) has biased composition (gly residues).

It belongs to the universal ribosomal protein uL15 family. As to quaternary structure, part of the 50S ribosomal subunit.

Functionally, binds to the 23S rRNA. In Rhizobium meliloti (strain 1021) (Ensifer meliloti), this protein is Large ribosomal subunit protein uL15.